Here is a 37-residue protein sequence, read N- to C-terminus: MKVRSSVKKMCDKCRVIRRHGKVMVICANPKHKQRQG.

Belongs to the bacterial ribosomal protein bL36 family.

The protein is Large ribosomal subunit protein bL36 of Synechococcus sp. (strain CC9605).